We begin with the raw amino-acid sequence, 440 residues long: Metacaspase-1 (440 aa).

The segment at 1-134 is disordered; sequence MFPGSGRKTY…NPQGFGQNSG (134 aa). Over residues 14-51 the composition is skewed to pro residues; the sequence is APPPGPPNGYQYGPPPGAQGQYPPPQGYPPQGYPPQGY. Over residues 52–81 the composition is skewed to low complexity; it reads PPQGYAPQGYPPQGYAPQGYAPQGYQQQGG. A compositionally biased stretch (gly residues) spans 82-94; that stretch reads QQQGGQQQGGQQQ. Over residues 98–110 the composition is skewed to polar residues; it reads RQTYATQEAQNFG. Active-site residues include His-230 and Cys-286.

It belongs to the peptidase C14B family.

Its function is as follows. Involved in cell death (apoptosis). In Debaryomyces hansenii (strain ATCC 36239 / CBS 767 / BCRC 21394 / JCM 1990 / NBRC 0083 / IGC 2968) (Yeast), this protein is Metacaspase-1 (MCA1).